We begin with the raw amino-acid sequence, 102 residues long: Small ribosomal subunit protein uS10 (102 aa).

It belongs to the universal ribosomal protein uS10 family. As to quaternary structure, part of the 30S ribosomal subunit.

Involved in the binding of tRNA to the ribosomes. This Thermoanaerobacter pseudethanolicus (strain ATCC 33223 / 39E) (Clostridium thermohydrosulfuricum) protein is Small ribosomal subunit protein uS10.